Here is a 149-residue protein sequence, read N- to C-terminus: Conglutin delta 3 (149 aa).

The N-terminal stretch at 1–22 is a signal peptide; the sequence is MAKLTILIALVAALVLVVHTSA. Cystine bridges form between Cys-30–Cys-98, Cys-42–Cys-86, Cys-87–Cys-134, and Cys-100–Cys-142.

It belongs to the 2S seed storage albumins family. In terms of assembly, heterodimer of a small chain and a large chain; disulfide-linked.

Its subcellular location is the endoplasmic reticulum. This chain is Conglutin delta 3, found in Lupinus angustifolius (Narrow-leaved blue lupine).